A 516-amino-acid chain; its full sequence is tRNA-guanine(15) transglycosylase (516 aa).

The Nucleophile role is filled by Asp93. Residues Asp128 and Ala196 each contribute to the substrate site. Positions 279, 281, and 284 each coordinate Zn(2+). Over residues Leu488–Gly502 the composition is skewed to low complexity. The interval Leu488 to Glu516 is disordered.

Belongs to the archaeosine tRNA-ribosyltransferase family. Zn(2+) serves as cofactor.

The catalysed reaction is guanosine(15) in tRNA + 7-cyano-7-deazaguanine = 7-cyano-7-carbaguanosine(15) in tRNA + guanine. It functions in the pathway tRNA modification; archaeosine-tRNA biosynthesis. Its function is as follows. Exchanges the guanine residue with 7-cyano-7-deazaguanine (preQ0) at position 15 in the dihydrouridine loop (D-loop) of archaeal tRNAs. The sequence is that of tRNA-guanine(15) transglycosylase from Haloferax volcanii (strain ATCC 29605 / DSM 3757 / JCM 8879 / NBRC 14742 / NCIMB 2012 / VKM B-1768 / DS2) (Halobacterium volcanii).